The chain runs to 887 residues: Transportin-2 (887 aa).

HEAT repeat units lie at residues 9 to 36, 41 to 79, 88 to 121, 127 to 164, 171 to 201, 214 to 241, 253 to 280, 296 to 386, 394 to 422, 434 to 461, 475 to 508, 516 to 549, 557 to 595, 603 to 654, 665 to 696, 704 to 737, 745 to 780, 788 to 821, 830 to 861, and 864 to 884; these read GLQQ…DKLK, FPDF…AHYQ, FIKQ…KGEL, LLPQ…LDSD, NIMI…QFIM, FIEH…VMLL, HSII…FWLT, VQLI…LANV, HLLP…GAIA, PELI…TLSR, LKPL…EEEA, LSYI…ADSV, EYIQ…TALQ, EPVY…GLGG, IMTL…KACF, AEFM…MQMG, QMVL…YVCP, QQFI…IGVN, IFFC…KDQV, and ENWQ…LAAF. Residues 31–99 enclose the Importin N-terminal domain; sequence VQDKLKQLNQ…KQECLNNIGD (69 aa). The disordered stretch occupies residues 344–363; it reads TLTHEAERPDSSEDAEDDDD. Lys-852 carries the N6-acetyllysine modification.

This sequence belongs to the importin beta family. Importin beta-2 subfamily.

It is found in the cytoplasm. The protein resides in the nucleus. Probably functions in nuclear protein import as nuclear transport receptor. Serves as receptor for nuclear localization signals (NLS) in cargo substrates. Is thought to mediate docking of the importin/substrate complex to the nuclear pore complex (NPC) through binding to nucleoporin and the complex is subsequently translocated through the pore by an energy requiring, Ran-dependent mechanism. At the nucleoplasmic side of the NPC, Ran binds to the importin, the importin/substrate complex dissociates and importin is re-exported from the nucleus to the cytoplasm where GTP hydrolysis releases Ran. The directionality of nuclear import is thought to be conferred by an asymmetric distribution of the GTP- and GDP-bound forms of Ran between the cytoplasm and nucleus. This Mus musculus (Mouse) protein is Transportin-2 (Tnpo2).